The chain runs to 209 residues: Cerebral peptide 1 (209 aa).

An N-terminal signal peptide occupies residues 1 to 20; the sequence is MLLAKISVVVLLLAIDGTSS. Polar residues predominate over residues 21-39; it reads SESTDNVVLSSSPDSQKAA. Residues 21–43 constitute a propeptide, connecting peptide 1; sequence SESTDNVVLSSSPDSQKAATSRH. A disordered region spans residues 21 to 56; it reads SESTDNVVLSSSPDSQKAATSRHKRAPGWGKRSSLN. A Tryptophan amide modification is found at Trp-49. Residues 53–77 constitute a propeptide, connecting peptide 2; sequence SSLNDEDLFADSDSAQELLDSVAAL. Tryptophan amide is present on residues Trp-83 and Trp-105. A disordered region spans residues 98–169; sequence EAKRAPGWGK…APGWGKRSGG (72 aa). The propeptide at 109–122 is connecting peptide 4; that stretch reads GQEIDVDEDGSEQE. A tryptophan amide mark is found at Trp-128, Trp-135, Trp-142, Trp-149, Trp-156, and Trp-163. A propeptide spans 167–191 (connecting peptide 5); the sequence is SGGDYCETLEKMVDAYIYKAVEVDS. A disulfide bridge links Cys-172 with Cys-197.

Homodimer; disulfide-linked. Cerebral peptide 1 is expressed in the cerebral, pedal and buccal ganglia and B1 and B2 neurons. APGW-amide is expressed in buccal ganglia and several neurons.

Its subcellular location is the secreted. Its function is as follows. May function as a peptide transmitter. The protein is Cerebral peptide 1 of Aplysia californica (California sea hare).